We begin with the raw amino-acid sequence, 798 residues long: MAMNTLQKLCVVCSKCNECAMDVECLKYCDPNIVSMDSTAFRRNGVMVIHLYRTLYPALVSQNAVQTSVLTLYMEMLLQGLYDTMREIDMALTDFGTHRDRQRYYRRVLKLDSCNRHESITITFAPELALTIDLATLNDVERLLCKINCVYGAVDASQGVAVCRRLLSLLARLCDICPVAGPEIYRETVTCFQCYEELMAVPNQGRSINRRMQGLLCDHITIKKVLVQLDMDAQAVEQDMGDIAIRAPSVKGIIRAIKSLASFSPASYAYINDAEEALRGYNLFSEIPDRIYSLSDYTYWSKTSEAIVRHVGITMRQLNVSHSLWKTLRTELSRYHYGEDLEDVFTLGEGRFGGDERIYVGSIFAAPGKVVDMITSMSIKSFENNPLFNRLHESNEIYAKIKSLIEEIRGVGDGPAAGAARSRAEAASGAGAGGEEGAGAAAGRGNTGGDEGAGTTTAMSSALECGDPLLRVHDVNKEVNVRKRAYLKKVSEMGYNKVMACIRNQEHLVTKLVNVNLVGTVCLEAVSKIMNGFLSRQRSITEAETYPDVAESLGYDEHLYVINNLVHKRLPSELLPQLGQQIYRFINGPMFTHYLDRHPLPYNVNMAYACDNAGILPHVKEDLVRCADGTVVPSDWMTVGYMGFFRFADIRELNDLQKMVWAHIRELVLSVALYNETFGKQLALWRVEDGDEIGDGIILTYNPESPLILRRGDRSYRSRDLYLLLYKHLSVDSETLADAGSRASVADLCQVERPGPIAEQRSSTQNVKKKRKRMSLLELVRDVDGAGGDDLVPPCLYK.

The C3H1-type zinc-finger motif lies at 191-219 (CFQCYEELMAVPNQGRSINRRMQGLLCDH). Over residues 416–429 (AAGAARSRAEAASG) the composition is skewed to low complexity. A disordered region spans residues 416–458 (AAGAARSRAEAASGAGAGGEEGAGAAAGRGNTGGDEGAGTTTA). The segment covering 430–452 (AGAGGEEGAGAAAGRGNTGGDEG) has biased composition (gly residues). 674–681 (YNETFGKQ) lines the ATP pocket.

Belongs to the herpesviridae TRM1 protein family. In terms of assembly, associates with TRM2 and TRM3 to form the tripartite terminase complex. Interacts with portal protein.

Its subcellular location is the host nucleus. In terms of biological role, component of the molecular motor that translocates viral genomic DNA in empty capsid during DNA packaging. Forms a tripartite terminase complex together with TRM2 and TRM3 in the host cytoplasm. Once the complex reaches the host nucleus, it interacts with the capsid portal vertex. This portal forms a ring in which genomic DNA is translocated into the capsid. TRM1 carries an endonuclease activity that plays an important role for the cleavage of concatemeric viral DNA into unit length genomes. The sequence is that of Tripartite terminase subunit 1 from Murid herpesvirus 1 (strain Smith) (MuHV-1).